Here is a 554-residue protein sequence, read N- to C-terminus: Glutamine--tRNA ligase (554 aa).

Positions 34–44 (PEPNGYLHIGH) match the 'HIGH' region motif. Residues 35 to 37 (EPN) and 41 to 47 (HIGHAKS) each bind ATP. Positions 67 and 212 each coordinate L-glutamine. Residues T231, 261–262 (RL), and 269–271 (MSK) contribute to the ATP site. The 'KMSKS' region motif lies at 268-272 (VMSKR). The segment at 317-324 (TKQDNTIE) is interaction with tRNA.

It belongs to the class-I aminoacyl-tRNA synthetase family. As to quaternary structure, monomer.

The protein resides in the cytoplasm. The enzyme catalyses tRNA(Gln) + L-glutamine + ATP = L-glutaminyl-tRNA(Gln) + AMP + diphosphate. The polypeptide is Glutamine--tRNA ligase (Escherichia coli O17:K52:H18 (strain UMN026 / ExPEC)).